The following is a 302-amino-acid chain: MAEILVDKLKEILKEGKLYLNEPMKRHTSFKIGGPADVLAVPGSRDELINLIAYLRQEKIPFFILGNGTNLLVSEKGIRGVVVKLSSLRNVIVEGTKIIAEAGASLSYIANVALVHELTGFEFASGIPGTLGGAIVMNAGAYGSEMKDVVEKVEVLDENNNILILSNQEMKFSYRYSILQEKEWIVLRAWISLERGNYEEIKKKMEELNQRRKEKQPLDYPSAGSTFKRPPGYYAGKLIEDAGLKGYSIGGAKVSEKHSGFIINTGNATFYDVLNLIEYIQKVVKEKFGVELMPEIKIVGEK.

In terms of domain architecture, FAD-binding PCMH-type spans 31-196; the sequence is KIGGPADVLA…LRAWISLERG (166 aa). Arg175 is a catalytic residue. Ser225 serves as the catalytic Proton donor. Glu295 is an active-site residue.

Belongs to the MurB family. Requires FAD as cofactor.

It localises to the cytoplasm. The catalysed reaction is UDP-N-acetyl-alpha-D-muramate + NADP(+) = UDP-N-acetyl-3-O-(1-carboxyvinyl)-alpha-D-glucosamine + NADPH + H(+). It participates in cell wall biogenesis; peptidoglycan biosynthesis. Functionally, cell wall formation. The sequence is that of UDP-N-acetylenolpyruvoylglucosamine reductase from Caldanaerobacter subterraneus subsp. tengcongensis (strain DSM 15242 / JCM 11007 / NBRC 100824 / MB4) (Thermoanaerobacter tengcongensis).